We begin with the raw amino-acid sequence, 252 residues long: 5-oxoprolinase subunit A (252 aa).

Belongs to the LamB/PxpA family. As to quaternary structure, forms a complex composed of PxpA, PxpB and PxpC.

The enzyme catalyses 5-oxo-L-proline + ATP + 2 H2O = L-glutamate + ADP + phosphate + H(+). In terms of biological role, catalyzes the cleavage of 5-oxoproline to form L-glutamate coupled to the hydrolysis of ATP to ADP and inorganic phosphate. The chain is 5-oxoprolinase subunit A from Mycolicibacterium gilvum (strain PYR-GCK) (Mycobacterium gilvum (strain PYR-GCK)).